The chain runs to 338 residues: Fructose-1,6-bisphosphatase 1 (338 aa).

Position 2 is an N-acetylthreonine (Thr2). AMP is bound by residues 18–22 (VMEEG) and 28–32 (TGEMT). 2 residues coordinate Mg(2+): Asp69 and Glu98. Position 113–114 (113–114 (KY)) interacts with AMP. Mg(2+)-binding residues include Asp119, Leu121, and Asp122. Residue 122–125 (DGSS) participates in substrate binding. Lys141 serves as a coordination point for AMP. Residue Lys151 is modified to N6-succinyllysine. Ser208 carries the phosphoserine modification. Substrate contacts are provided by residues 213–216 (NEGY), 244–249 (RYVGSM), Tyr265, and 275–277 (KLR). Phosphotyrosine is present on residues Tyr216, Tyr245, and Tyr265. Glu281 provides a ligand contact to Mg(2+).

This sequence belongs to the FBPase class 1 family. As to quaternary structure, homotetramer. It depends on Mg(2+) as a cofactor.

The enzyme catalyses beta-D-fructose 1,6-bisphosphate + H2O = beta-D-fructose 6-phosphate + phosphate. It functions in the pathway carbohydrate biosynthesis; gluconeogenesis. Subject to complex allosteric regulation. The enzyme can assume an active R-state, or an inactive T-state. Intermediate conformations may exist. AMP acts as an allosteric inhibitor. AMP binding affects the turnover of bound substrate and not the affinity for substrate. Fructose 2,6-bisphosphate acts as a competitive inhibitor. Fructose 2,6-bisphosphate and AMP have synergistic effects. Its function is as follows. Catalyzes the hydrolysis of fructose 1,6-bisphosphate to fructose 6-phosphate in the presence of divalent cations, acting as a rate-limiting enzyme in gluconeogenesis. Plays a role in regulating glucose sensing and insulin secretion of pancreatic beta-cells. Appears to modulate glycerol gluconeogenesis in liver. Important regulator of appetite and adiposity; increased expression of the protein in liver after nutrient excess increases circulating satiety hormones and reduces appetite-stimulating neuropeptides and thus seems to provide a feedback mechanism to limit weight gain. The polypeptide is Fructose-1,6-bisphosphatase 1 (FBP1) (Bos taurus (Bovine)).